Reading from the N-terminus, the 929-residue chain is Bifunctional uridylyltransferase/uridylyl-removing enzyme (929 aa).

A uridylyltransferase region spans residues 1–383 (MDSVTTEHKQ…RPTPAKRRVP (383 aa)). A uridylyl-removing region spans residues 384–739 (DSDDFIVDNN…VGFDEVRGVT (356 aa)). The 124-residue stretch at 499–622 (VDEHLIRCVG…VQSVEQMKLL (124 aa)) folds into the HD domain. 2 ACT domains span residues 740 to 822 (ELTI…VVAR) and 850 to 927 (VIEV…AVQP).

The protein belongs to the GlnD family. It depends on Mg(2+) as a cofactor.

It catalyses the reaction [protein-PII]-L-tyrosine + UTP = [protein-PII]-uridylyl-L-tyrosine + diphosphate. The enzyme catalyses [protein-PII]-uridylyl-L-tyrosine + H2O = [protein-PII]-L-tyrosine + UMP + H(+). With respect to regulation, uridylyltransferase (UTase) activity is inhibited by glutamine, while glutamine activates uridylyl-removing (UR) activity. In terms of biological role, modifies, by uridylylation and deuridylylation, the PII regulatory proteins (GlnB and homologs), in response to the nitrogen status of the cell that GlnD senses through the glutamine level. Under low glutamine levels, catalyzes the conversion of the PII proteins and UTP to PII-UMP and PPi, while under higher glutamine levels, GlnD hydrolyzes PII-UMP to PII and UMP (deuridylylation). Thus, controls uridylylation state and activity of the PII proteins, and plays an important role in the regulation of nitrogen fixation and metabolism. The chain is Bifunctional uridylyltransferase/uridylyl-removing enzyme from Bradyrhizobium diazoefficiens (strain JCM 10833 / BCRC 13528 / IAM 13628 / NBRC 14792 / USDA 110).